The following is a 247-amino-acid chain: Coproheme decarboxylase (247 aa).

Residues Arg-129, 143–147 (YPMDK), His-170, Gln-183, and Ser-221 each bind Fe-coproporphyrin III. Tyr-143 is a catalytic residue.

It belongs to the ChdC family. Type 1 subfamily. The cofactor is Fe-coproporphyrin III.

The catalysed reaction is Fe-coproporphyrin III + 2 H2O2 + 2 H(+) = heme b + 2 CO2 + 4 H2O. The enzyme catalyses Fe-coproporphyrin III + H2O2 + H(+) = harderoheme III + CO2 + 2 H2O. It carries out the reaction harderoheme III + H2O2 + H(+) = heme b + CO2 + 2 H2O. The protein operates within porphyrin-containing compound metabolism; protoheme biosynthesis. Functionally, involved in coproporphyrin-dependent heme b biosynthesis. Catalyzes the decarboxylation of Fe-coproporphyrin III (coproheme) to heme b (protoheme IX), the last step of the pathway. The reaction occurs in a stepwise manner with a three-propionate intermediate. This chain is Coproheme decarboxylase, found in Bacillus mycoides (strain KBAB4) (Bacillus weihenstephanensis).